The primary structure comprises 98 residues: Large ribosomal subunit protein uL23 (98 aa).

This sequence belongs to the universal ribosomal protein uL23 family. In terms of assembly, part of the 50S ribosomal subunit. Contacts protein L29, and trigger factor when it is bound to the ribosome.

Functionally, one of the early assembly proteins it binds 23S rRNA. One of the proteins that surrounds the polypeptide exit tunnel on the outside of the ribosome. Forms the main docking site for trigger factor binding to the ribosome. The polypeptide is Large ribosomal subunit protein uL23 (Frankia casuarinae (strain DSM 45818 / CECT 9043 / HFP020203 / CcI3)).